Consider the following 122-residue polypeptide: Acidic phospholipase A2 Tpu-E6b (122 aa).

Disulfide bonds link Cys-26–Cys-115, Cys-28–Cys-44, Cys-43–Cys-95, Cys-49–Cys-122, Cys-50–Cys-88, Cys-57–Cys-81, and Cys-75–Cys-86. 3 residues coordinate Ca(2+): Tyr-27, Gly-29, and Gly-31. The active site involves His-47. Ca(2+) is bound at residue Asp-48. Asp-89 is a catalytic residue.

In terms of assembly, monomer. It depends on Ca(2+) as a cofactor. In terms of tissue distribution, expressed by the venom gland.

It is found in the secreted. The enzyme catalyses a 1,2-diacyl-sn-glycero-3-phosphocholine + H2O = a 1-acyl-sn-glycero-3-phosphocholine + a fatty acid + H(+). Functionally, snake venom phospholipase A2 (PLA2) that weakly inhibits ADP-induced platelet aggregation when tested on platelet rich plasma from human and rabbit blood (15-25% of inhibition at 5-10 ug of enzyme). Exhibits moderate hydrolytic activities toward L-dipalmitoyl phosphatidylcholine. PLA2 catalyzes the calcium-dependent hydrolysis of the 2-acyl groups in 3-sn-phosphoglycerides. The sequence is that of Acidic phospholipase A2 Tpu-E6b from Craspedocephalus puniceus (Flat-nosed pitviper).